The primary structure comprises 53 residues: Large ribosomal subunit protein bL33 (53 aa).

It belongs to the bacterial ribosomal protein bL33 family.

This chain is Large ribosomal subunit protein bL33, found in Blochmanniella floridana.